The chain runs to 342 residues: Nicotinate-nucleotide--dimethylbenzimidazole phosphoribosyltransferase (342 aa).

Catalysis depends on E311, which acts as the Proton acceptor.

Belongs to the CobT family.

It carries out the reaction 5,6-dimethylbenzimidazole + nicotinate beta-D-ribonucleotide = alpha-ribazole 5'-phosphate + nicotinate + H(+). It functions in the pathway nucleoside biosynthesis; alpha-ribazole biosynthesis; alpha-ribazole from 5,6-dimethylbenzimidazole: step 1/2. Functionally, catalyzes the synthesis of alpha-ribazole-5'-phosphate from nicotinate mononucleotide (NAMN) and 5,6-dimethylbenzimidazole (DMB). In Photobacterium profundum (strain SS9), this protein is Nicotinate-nucleotide--dimethylbenzimidazole phosphoribosyltransferase.